The sequence spans 130 residues: Sulfurtransferase TusD (130 aa).

Catalysis depends on C78, which acts as the Cysteine persulfide intermediate.

It belongs to the DsrE/TusD family. Heterohexamer, formed by a dimer of trimers. The hexameric TusBCD complex contains 2 copies each of TusB, TusC and TusD. The TusBCD complex interacts with TusE.

The protein resides in the cytoplasm. Its function is as follows. Part of a sulfur-relay system required for 2-thiolation of 5-methylaminomethyl-2-thiouridine (mnm(5)s(2)U) at tRNA wobble positions. Accepts sulfur from TusA and transfers it in turn to TusE. The sequence is that of Sulfurtransferase TusD from Buchnera aphidicola subsp. Baizongia pistaciae (strain Bp).